The chain runs to 310 residues: D-alanine--D-alanine ligase (310 aa).

The 199-residue stretch at 107–305 folds into the ATP-grasp domain; it reads KKVWQSAGLP…FSALVQSILA (199 aa). Position 134-189 (134-189) interacts with ATP; the sequence is EQLHCQDFVIKPALEGSSVGVSRVKNQEQLAAAIPFAGGARAKIMAEPWIVGRELT. The Mg(2+) site is built by D259, E272, and N274.

It belongs to the D-alanine--D-alanine ligase family. Mg(2+) is required as a cofactor. It depends on Mn(2+) as a cofactor.

The protein localises to the cytoplasm. The catalysed reaction is 2 D-alanine + ATP = D-alanyl-D-alanine + ADP + phosphate + H(+). Its pathway is cell wall biogenesis; peptidoglycan biosynthesis. In terms of biological role, cell wall formation. The protein is D-alanine--D-alanine ligase of Dichelobacter nodosus (strain VCS1703A).